Here is a 267-residue protein sequence, read N- to C-terminus: Potassium channel regulatory protein (267 aa).

The 70-residue stretch at 5–74 (ELVTLNVGGK…LRTQQLLLPT (70 aa)) folds into the BTB domain.

In terms of assembly, can form homooligomers. Interacts with KCNA1 (via cytoplasmic N-terminal domain) and KCNA4.

It localises to the endoplasmic reticulum. Inhibits potassium fluxes in cells. May regulate Kv1 family channel proteins by retaining a fraction of channels in endomembranes. This chain is Potassium channel regulatory protein (KCNRG), found in Bos taurus (Bovine).